A 304-amino-acid chain; its full sequence is Dihydroorotate dehydrogenase B (NAD(+)), catalytic subunit (304 aa).

FMN-binding positions include Ser-20 and 44 to 45 (KA). Substrate is bound by residues Lys-44 and 68 to 72 (NAIGL). FMN is bound by residues Asn-98 and Asn-126. Substrate is bound at residue Asn-126. The active-site Nucleophile is Cys-129. Residues Lys-164 and Ile-190 each contribute to the FMN site. Substrate is bound at residue 191 to 192 (NT). FMN-binding positions include Gly-216, 242 to 243 (GG), and 264 to 265 (GT).

Belongs to the dihydroorotate dehydrogenase family. Type 1 subfamily. In terms of assembly, heterotetramer of 2 PyrK and 2 PyrD type B subunits. Requires FMN as cofactor.

It localises to the cytoplasm. The enzyme catalyses (S)-dihydroorotate + NAD(+) = orotate + NADH + H(+). It functions in the pathway pyrimidine metabolism; UMP biosynthesis via de novo pathway; orotate from (S)-dihydroorotate (NAD(+) route): step 1/1. In terms of biological role, catalyzes the conversion of dihydroorotate to orotate with NAD(+) as electron acceptor. The sequence is that of Dihydroorotate dehydrogenase B (NAD(+)), catalytic subunit (pyrD) from Oceanobacillus iheyensis (strain DSM 14371 / CIP 107618 / JCM 11309 / KCTC 3954 / HTE831).